We begin with the raw amino-acid sequence, 287 residues long: 33 kDa chaperonin (287 aa).

2 disulfide bridges follow: Cys231–Cys233 and Cys264–Cys267.

The protein belongs to the HSP33 family. In terms of processing, under oxidizing conditions two disulfide bonds are formed involving the reactive cysteines. Under reducing conditions zinc is bound to the reactive cysteines and the protein is inactive.

The protein resides in the cytoplasm. Redox regulated molecular chaperone. Protects both thermally unfolding and oxidatively damaged proteins from irreversible aggregation. Plays an important role in the bacterial defense system toward oxidative stress. The chain is 33 kDa chaperonin from Thermosipho melanesiensis (strain DSM 12029 / CIP 104789 / BI429).